Reading from the N-terminus, the 203-residue chain is Endo-type membrane-bound lytic murein transglycosylase A (203 aa).

Residues 1–15 form the signal peptide; it reads MKLRWFAFLIVLLAG. The N-palmitoyl cysteine moiety is linked to residue cysteine 16. A lipid anchor (S-diacylglycerol cysteine) is attached at cysteine 16.

This sequence belongs to the transglycosylase Slt family.

Its subcellular location is the cell outer membrane. The enzyme catalyses Endolytic cleavage of the (1-&gt;4)-beta-glycosidic linkage between N-acetylmuramic acid (MurNAc) and N-acetylglucosamine (GlcNAc) residues in peptidoglycan with concomitant formation of a 1,6-anhydrobond in the MurNAc residue.. Murein-degrading enzyme. May play a role in recycling of muropeptides during cell elongation and/or cell division. Preferentially cleaves at a distance of more than two disaccharide units from the ends of the glycan chain. The sequence is that of Endo-type membrane-bound lytic murein transglycosylase A from Shigella dysenteriae serotype 1 (strain Sd197).